Consider the following 223-residue polypeptide: GTP cyclohydrolase 1 (223 aa).

3 residues coordinate Zn(2+): Cys114, His117, and Cys185.

This sequence belongs to the GTP cyclohydrolase I family. As to quaternary structure, homomer.

It carries out the reaction GTP + H2O = 7,8-dihydroneopterin 3'-triphosphate + formate + H(+). The protein operates within cofactor biosynthesis; 7,8-dihydroneopterin triphosphate biosynthesis; 7,8-dihydroneopterin triphosphate from GTP: step 1/1. The sequence is that of GTP cyclohydrolase 1 from Chlorobium phaeovibrioides (strain DSM 265 / 1930) (Prosthecochloris vibrioformis (strain DSM 265)).